A 522-amino-acid polypeptide reads, in one-letter code: Man(5)GlcNAc(2)-PP-dolichol translocation protein RFT1 (522 aa).

10 helical membrane passes run 35–55 (DVLG…LFLT), 75–95 (LLWL…YLWY), 108–128 (VLLS…FSVI), 143–165 (FAIG…LFMF), 177–197 (AQYI…YIYI), 322–342 (VVGV…PVVI), 354–374 (GGAL…INGI), 400–420 (IIHL…GFIV), 457–477 (TSIF…LFAT), and 479–499 (PGLS…ILTA).

It belongs to the RFT1 family.

It localises to the endoplasmic reticulum membrane. It participates in protein modification; protein glycosylation. Intramembrane glycolipid transporter that operates in the biosynthetic pathway of dolichol-linked oligosaccharides, the glycan precursors employed in protein asparagine (N)-glycosylation. The sequential addition of sugars to dolichol pyrophosphate produces dolichol-linked oligosaccharides containing fourteen sugars, including two GlcNAcs, nine mannoses and three glucoses. Once assembled, the oligosaccharide is transferred from the lipid to nascent proteins by oligosaccharyltransferases. The assembly of dolichol-linked oligosaccharides begins on the cytosolic side of the endoplasmic reticulum membrane and finishes in its lumen. RFT1 could mediate the translocation of the cytosolically oriented intermediate DolPP-GlcNAc2Man5, produced by ALG11, into the ER lumen where dolichol-linked oligosaccharides assembly continues. However, the intramembrane lipid transporter activity could not be confirmed in vitro. This is Man(5)GlcNAc(2)-PP-dolichol translocation protein RFT1 from Caenorhabditis elegans.